Reading from the N-terminus, the 282-residue chain is NAD-dependent protein deacetylase 1 (282 aa).

The 282-residue stretch at 1 to 282 (MTVGRAESPE…ADELSPLPTH (282 aa)) folds into the Deacetylase sirtuin-type domain. NAD(+) is bound by residues 25–45 (GAGI…SPPS) and 101–104 (QNVD). The Proton acceptor role is filled by His-119. Zn(2+)-binding residues include Cys-127, Cys-130, Cys-181, and Cys-184. NAD(+)-binding positions include 221–223 (GSS), 247–249 (NRG), and Cys-265.

This sequence belongs to the sirtuin family. Class II subfamily. Zn(2+) is required as a cofactor.

Its subcellular location is the cytoplasm. It carries out the reaction N(6)-acetyl-L-lysyl-[protein] + NAD(+) + H2O = 2''-O-acetyl-ADP-D-ribose + nicotinamide + L-lysyl-[protein]. NAD-dependent protein deacetylase which modulates the activities of several enzymes which are inactive in their acetylated form. In Mycobacterium avium (strain 104), this protein is NAD-dependent protein deacetylase 1.